A 208-amino-acid chain; its full sequence is Large ribosomal subunit protein uL3 (208 aa).

Residues 134 to 159 form a disordered region; the sequence is SKFHREAGSTGHCTTPGRSFKNTTMP. Residues 144–158 show a composition bias toward polar residues; that stretch reads GHCTTPGRSFKNTTM.

It belongs to the universal ribosomal protein uL3 family. As to quaternary structure, part of the 50S ribosomal subunit. Forms a cluster with proteins L14 and L19.

In terms of biological role, one of the primary rRNA binding proteins, it binds directly near the 3'-end of the 23S rRNA, where it nucleates assembly of the 50S subunit. The chain is Large ribosomal subunit protein uL3 from Treponema denticola (strain ATCC 35405 / DSM 14222 / CIP 103919 / JCM 8153 / KCTC 15104).